Reading from the N-terminus, the 375-residue chain is Putative F-box only protein 11 (375 aa).

In terms of domain architecture, F-box spans 1-46; the sequence is MVSVNLPWELVEEILCRVPPQSLVKFRTVCKQWNSLFDDNKFVNDH.

The protein is Putative F-box only protein 11 (FBX11) of Arabidopsis thaliana (Mouse-ear cress).